We begin with the raw amino-acid sequence, 379 residues long: UDP-4-amino-4-deoxy-L-arabinose--oxoglutarate aminotransferase (379 aa).

Lysine 182 is subject to N6-(pyridoxal phosphate)lysine.

It belongs to the DegT/DnrJ/EryC1 family. ArnB subfamily. In terms of assembly, homodimer. It depends on pyridoxal 5'-phosphate as a cofactor.

The catalysed reaction is UDP-4-amino-4-deoxy-beta-L-arabinose + 2-oxoglutarate = UDP-beta-L-threo-pentopyranos-4-ulose + L-glutamate. Its pathway is nucleotide-sugar biosynthesis; UDP-4-deoxy-4-formamido-beta-L-arabinose biosynthesis; UDP-4-deoxy-4-formamido-beta-L-arabinose from UDP-alpha-D-glucuronate: step 2/3. It functions in the pathway bacterial outer membrane biogenesis; lipopolysaccharide biosynthesis. Functionally, catalyzes the conversion of UDP-4-keto-arabinose (UDP-Ara4O) to UDP-4-amino-4-deoxy-L-arabinose (UDP-L-Ara4N). The modified arabinose is attached to lipid A and is required for resistance to polymyxin and cationic antimicrobial peptides. The chain is UDP-4-amino-4-deoxy-L-arabinose--oxoglutarate aminotransferase from Escherichia coli O7:K1 (strain IAI39 / ExPEC).